Here is a 318-residue protein sequence, read N- to C-terminus: UDP-N-acetylenolpyruvoylglucosamine reductase (318 aa).

The FAD-binding PCMH-type domain maps to Ile-38 to Gly-204. Residue Arg-182 is part of the active site. Basic and acidic residues predominate over residues Ser-212 to Lys-229. Residues Ser-212–Gly-232 are disordered. Ser-233 functions as the Proton donor in the catalytic mechanism. Glu-310 is a catalytic residue.

The protein belongs to the MurB family. FAD is required as a cofactor.

The protein resides in the cytoplasm. It catalyses the reaction UDP-N-acetyl-alpha-D-muramate + NADP(+) = UDP-N-acetyl-3-O-(1-carboxyvinyl)-alpha-D-glucosamine + NADPH + H(+). Its pathway is cell wall biogenesis; peptidoglycan biosynthesis. Functionally, cell wall formation. The polypeptide is UDP-N-acetylenolpyruvoylglucosamine reductase (Leptospira interrogans serogroup Icterohaemorrhagiae serovar copenhageni (strain Fiocruz L1-130)).